The sequence spans 202 residues: Imidazoleglycerol-phosphate dehydratase (202 aa).

Belongs to the imidazoleglycerol-phosphate dehydratase family. Homotrimer.

The catalysed reaction is D-erythro-1-(imidazol-4-yl)glycerol 3-phosphate = 3-(imidazol-4-yl)-2-oxopropyl phosphate + H2O. Its pathway is amino-acid biosynthesis; L-histidine biosynthesis; L-histidine from 5-phospho-alpha-D-ribose 1-diphosphate: step 6/9. The sequence is that of Imidazoleglycerol-phosphate dehydratase (HIS3) from Cryptococcus neoformans var. neoformans serotype D (strain B-3501A) (Filobasidiella neoformans).